A 57-amino-acid polypeptide reads, in one-letter code: Preprotein translocase subunit SecG (57 aa).

Residues 1–33 (MARRRRYEGLNPFVAAGLIKFSEEGELERIKLT) lie on the Cytoplasmic side of the membrane. A helical transmembrane segment spans residues 34–55 (PKSAVVISVALIAAILVLNLIH). Residues 56 to 57 (PL) lie on the Extracellular side of the membrane.

It belongs to the SEC61-beta family. Component of the protein translocase complex. Heterotrimer consisting of alpha (SecY), beta (SecG) and gamma (SecE) subunits. Can form oligomers of the heterotrimer.

It localises to the cell membrane. Functionally, involved in protein export. The function of the beta subunit is unknown, but it may be involved in stabilization of the trimeric complex. This is Preprotein translocase subunit SecG from Pyrobaculum neutrophilum (strain DSM 2338 / JCM 9278 / NBRC 100436 / V24Sta) (Thermoproteus neutrophilus).